We begin with the raw amino-acid sequence, 447 residues long: Trigger factor (447 aa).

In terms of domain architecture, PPIase FKBP-type spans 159 to 244; the sequence is GDMLLMQVES…VREIKEEKLP (86 aa).

This sequence belongs to the FKBP-type PPIase family. Tig subfamily.

The protein localises to the cytoplasm. The enzyme catalyses [protein]-peptidylproline (omega=180) = [protein]-peptidylproline (omega=0). Functionally, involved in protein export. Acts as a chaperone by maintaining the newly synthesized protein in an open conformation. Functions as a peptidyl-prolyl cis-trans isomerase. The polypeptide is Trigger factor (Dehalococcoides mccartyi (strain CBDB1)).